The chain runs to 869 residues: Histone deacetylase 4 (869 aa).

3 disordered regions span residues 1 to 25, 128 to 167, and 180 to 218; these read MEEASSSTGSAGGAGPSVPNLPSTS, SSSNGNLSVPQTPTKEHHPTAPTSNRKCDLPRSNSTTISQ, and RSKGESNSQSNLMSNSVTANGNGHDNGRKLKNSNSQVNV. Residues 184-202 show a composition bias toward polar residues; sequence ESNSQSNLMSNSVTANGNG. The residue at position 251 (Ser-251) is a Phosphoserine. The interval 460–802 is histone deacetylase; that stretch reads CTTGLGYDQA…VQALIGESDD (343 aa). His-608 is a catalytic residue.

Belongs to the histone deacetylase family. HD type 2 subfamily. As to quaternary structure, interacts with mef-2. In terms of processing, phosphorylated by serine/threonine-protein kinase kin-29 at Ser-251; the phosphorylation inhibits repression of transcription by mef-2. May be phosphorylated by either cyclic-AMP dependent or cyclic-GMP dependent protein kinases. As to expression, expressed in body-wall muscle cells, hypodermal seam cells and neuronal cells including sensory amphid neuronal processes, the nerve ring, ventral nerve cords and motor neuronal commissures.

The protein localises to the nucleus. It carries out the reaction N(6)-acetyl-L-lysyl-[histone] + H2O = L-lysyl-[histone] + acetate. Responsible for the deacetylation of lysine residues on the N-terminal part of the core histones (H2A, H2B, H3 and H4). Histone deacetylation gives a tag for epigenetic repression and plays an important role in transcriptional regulation, cell cycle progression and developmental events. Histone deacetylases act via the formation of large multiprotein complexes. Involved in transduction of sensory signals, together with egl-4, kin-29 and mef-2; binding to transcription factor mef-2 enables negative modulation of chemoreceptor gene expression in chemosensory neurons. May be involved in muscle development. This is Histone deacetylase 4 (hda-4) from Caenorhabditis elegans.